The following is a 77-amino-acid chain: Acyl carrier protein (77 aa).

A Carrier domain is found at 1 to 76 (MAVFDEVKDV…DVVNYIDGLK (76 aa)). The residue at position 36 (S36) is an O-(pantetheine 4'-phosphoryl)serine.

It belongs to the acyl carrier protein (ACP) family. 4'-phosphopantetheine is transferred from CoA to a specific serine of apo-ACP by AcpS. This modification is essential for activity because fatty acids are bound in thioester linkage to the sulfhydryl of the prosthetic group.

The protein localises to the cytoplasm. The protein operates within lipid metabolism; fatty acid biosynthesis. Its function is as follows. Carrier of the growing fatty acid chain in fatty acid biosynthesis. This Campylobacter fetus subsp. fetus (strain 82-40) protein is Acyl carrier protein.